The primary structure comprises 161 residues: Phosphopantetheine adenylyltransferase (161 aa).

Serine 11 contacts substrate. ATP-binding positions include serine 11 to phenylalanine 12 and histidine 19. Substrate-binding residues include lysine 43, leucine 75, and arginine 89. ATP is bound by residues glycine 90–arginine 92, glutamate 100, and tyrosine 125–serine 131.

Belongs to the bacterial CoaD family. As to quaternary structure, homohexamer. It depends on Mg(2+) as a cofactor.

Its subcellular location is the cytoplasm. The enzyme catalyses (R)-4'-phosphopantetheine + ATP + H(+) = 3'-dephospho-CoA + diphosphate. Its pathway is cofactor biosynthesis; coenzyme A biosynthesis; CoA from (R)-pantothenate: step 4/5. Functionally, reversibly transfers an adenylyl group from ATP to 4'-phosphopantetheine, yielding dephospho-CoA (dPCoA) and pyrophosphate. The chain is Phosphopantetheine adenylyltransferase from Staphylococcus saprophyticus subsp. saprophyticus (strain ATCC 15305 / DSM 20229 / NCIMB 8711 / NCTC 7292 / S-41).